Here is a 121-residue protein sequence, read N- to C-terminus: Protein YxiB (121 aa).

The chain is Protein YxiB (yxiB) from Bacillus subtilis (strain 168).